The following is a 664-amino-acid chain: Putative carboxypeptidase suro-1 (664 aa).

A signal peptide spans 1 to 23 (MRYLCKSILLAVHTILLVGSVCC). Residues 24–110 (STDVHNTDDK…MSVPDVEKLI (87 aa)) constitute a propeptide, activation peptide. Residues 160–473 (DYASYADMVK…EGFREVVDAV (314 aa)) form the Peptidase M14 domain. Positions 219 and 222 each coordinate Zn(2+). Residues 219–222 (HARE), Arg-281, and 306–307 (NR) contribute to the substrate site. Position 361 (His-361) interacts with Zn(2+). 362 to 363 (SY) serves as a coordination point for substrate. Glu-437 (proton donor/acceptor) is an active-site residue. A compositionally biased stretch (low complexity) spans 512–543 (ASQAAGSTTRSTTTLKTSTTSVSTTSEATSPS). Positions 512–590 (ASQAAGSTTR…TTTTEEEDVT (79 aa)) are disordered. Residues 564 to 573 (PTPPMAPPIM) show a composition bias toward pro residues. Residues 574–583 (SPSTEFSTTT) show a composition bias toward low complexity. The ShKT domain occupies 621–657 (CRDMRYSCGFWLKNNKQVCEEQQSFMRAQCAYTCKFC). 3 disulfides stabilise this stretch: Cys-621–Cys-657, Cys-628–Cys-650, and Cys-639–Cys-654.

This sequence belongs to the peptidase M14 family. It depends on Zn(2+) as a cofactor. Localizes in stripes along the cuticle.

It is found in the cytoplasmic vesicle. The protein localises to the secreted. May play a role in processing or organization of cuticle collagen proteins, including rol-6 and col-19. The polypeptide is Putative carboxypeptidase suro-1 (Caenorhabditis elegans).